A 532-amino-acid polypeptide reads, in one-letter code: UDP-N-acetylmuramyl-tripeptide synthetase (532 aa).

Ser-34 is a binding site for UDP-N-acetyl-alpha-D-muramoyl-L-alanyl-D-glutamate. An ATP-binding site is contributed by 127–133 (GTEGKSS). UDP-N-acetyl-alpha-D-muramoyl-L-alanyl-D-glutamate is bound by residues 171–172 (TT), Ser-198, and Arg-208. N6-carboxylysine is present on Lys-240.

The protein belongs to the MurCDEF family. MurE subfamily. Carboxylation is probably crucial for Mg(2+) binding and, consequently, for the gamma-phosphate positioning of ATP.

It localises to the cytoplasm. Its pathway is cell wall biogenesis; peptidoglycan biosynthesis. Its function is as follows. Catalyzes the addition of an amino acid to the nucleotide precursor UDP-N-acetylmuramoyl-L-alanyl-D-glutamate (UMAG) in the biosynthesis of bacterial cell-wall peptidoglycan. In Treponema denticola (strain ATCC 35405 / DSM 14222 / CIP 103919 / JCM 8153 / KCTC 15104), this protein is UDP-N-acetylmuramyl-tripeptide synthetase.